The sequence spans 116 residues: FK506-binding protein 1 (116 aa).

The 98-residue stretch at 19–116 folds into the PPIase FKBP-type domain; that stretch reads GDKVSIHYTG…IFEVELLKIN (98 aa).

This sequence belongs to the FKBP-type PPIase family. FKBP1 subfamily.

The protein resides in the cytoplasm. The catalysed reaction is [protein]-peptidylproline (omega=180) = [protein]-peptidylproline (omega=0). Its activity is regulated as follows. Inhibited by both FK506 and rapamycin. Functionally, PPIases accelerate the folding of proteins. It catalyzes the cis-trans isomerization of proline imidic peptide bonds in oligopeptides. This is FK506-binding protein 1 (fpr1) from Aspergillus oryzae (strain ATCC 42149 / RIB 40) (Yellow koji mold).